The chain runs to 1194 residues: Peroxisomal ATPase PEX1 (1194 aa).

A disordered region spans residues lysine 220 to glycine 255. Residues threonine 221–lysine 234 show a composition bias toward basic residues. An AAA-cassette D1 region spans residues arginine 538–lysine 730. Residues glycine 546 to threonine 553 and glycine 849 to threonine 856 contribute to the ATP site. The segment at glycine 844–histidine 1028 is AAA-cassette D2. Disordered regions lie at residues tyrosine 1062–glycine 1084, glutamine 1116–isoleucine 1139, and arginine 1174–methionine 1194. The segment covering serine 1066–glycine 1084 has biased composition (polar residues). Residues glutamine 1116 to alanine 1127 show a composition bias toward low complexity.

It belongs to the AAA ATPase family. As to quaternary structure, interacts with PEX6; forming the PEX1-PEX6 AAA ATPase complex, which is composed of a heterohexamer formed by a trimer of PEX1-PEX6 dimers.

It is found in the cytoplasm. The protein localises to the cytosol. It localises to the peroxisome membrane. The enzyme catalyses ATP + H2O = ADP + phosphate + H(+). Functionally, component of the PEX1-PEX6 AAA ATPase complex, a protein dislocase complex that mediates the ATP-dependent extraction of the PEX5 receptor from peroxisomal membranes, an essential step for PEX5 recycling. Specifically recognizes PEX5 monoubiquitinated at 'Cys-6', and pulls it out of the peroxisome lumen through the PEX2-PEX10-PEX12 retrotranslocation channel. Extraction by the PEX1-PEX6 AAA ATPase complex is accompanied by unfolding of the TPR repeats and release of bound cargo from PEX5. Regulates autophagy and biogenesis of peroxisomes and Woronin bodies. Plays important roles in mycelial growth and development and stress response. Is also essential for conidiation and fatty acid utilization. Required for nematode predation via trap formation. The chain is Peroxisomal ATPase PEX1 from Arthrobotrys oligospora (strain ATCC 24927 / CBS 115.81 / DSM 1491) (Nematode-trapping fungus).